Reading from the N-terminus, the 317-residue chain is Flavin-dependent thymidylate synthase (317 aa).

Ser-46 lines the FAD pocket. An insert region spans residues 55-166; that stretch reads FEWKKEKWIE…ELETDMDFYT (112 aa). The region spanning 100–317 is the ThyX domain; it reads AVKERIKEAF…YRGTDKKNVI (218 aa). DUMP-binding positions include 178-181, 189-193, and Arg-259; these read QWMR and EVSKR. FAD contacts are provided by residues 181 to 183 and Glu-189; that span reads RHR. Positions 181–191 match the ThyX motif motif; the sequence is RHRFGSYNEVS. Position 281 (Asn-281) interacts with FAD. Arg-286 is a binding site for dUMP. The Involved in ionization of N3 of dUMP, leading to its activation role is filled by Arg-286.

It belongs to the thymidylate synthase ThyX family. Homotetramer. It depends on FAD as a cofactor.

It carries out the reaction dUMP + (6R)-5,10-methylene-5,6,7,8-tetrahydrofolate + NADPH + H(+) = dTMP + (6S)-5,6,7,8-tetrahydrofolate + NADP(+). It functions in the pathway pyrimidine metabolism; dTTP biosynthesis. Its function is as follows. Catalyzes the reductive methylation of 2'-deoxyuridine-5'-monophosphate (dUMP) to 2'-deoxythymidine-5'-monophosphate (dTMP) while utilizing 5,10-methylenetetrahydrofolate (mTHF) as the methyl donor, and NADPH and FADH(2) as the reductant. The chain is Flavin-dependent thymidylate synthase from Aquifex aeolicus (strain VF5).